The following is a 151-amino-acid chain: uncharacterized protein (151 aa).

To equivalent protein in phage 82.

This is an uncharacterized protein from Escherichia coli (strain K12).